The chain runs to 394 residues: Elongation factor Tu (394 aa).

Positions 10-204 constitute a tr-type G domain; that stretch reads KPHVNVGTIG…HLDTYIPEPE (195 aa). Residues 19 to 26 form a G1 region; it reads GHVDHGKT. Residue 19–26 coordinates GTP; the sequence is GHVDHGKT. Residue T26 participates in Mg(2+) binding. A G2 region spans residues 60–64; the sequence is GITIN. The tract at residues 81–84 is G3; sequence DCPG. GTP is bound by residues 81 to 85 and 136 to 139; these read DCPGH and NKCD. The tract at residues 136 to 139 is G4; sequence NKCD. The G5 stretch occupies residues 174 to 176; it reads SAL.

This sequence belongs to the TRAFAC class translation factor GTPase superfamily. Classic translation factor GTPase family. EF-Tu/EF-1A subfamily. Monomer.

It localises to the cytoplasm. It carries out the reaction GTP + H2O = GDP + phosphate + H(+). In terms of biological role, GTP hydrolase that promotes the GTP-dependent binding of aminoacyl-tRNA to the A-site of ribosomes during protein biosynthesis. This chain is Elongation factor Tu, found in Aeromonas hydrophila subsp. hydrophila (strain ATCC 7966 / DSM 30187 / BCRC 13018 / CCUG 14551 / JCM 1027 / KCTC 2358 / NCIMB 9240 / NCTC 8049).